Consider the following 947-residue polypeptide: Bifunctional glutamine synthetase adenylyltransferase/adenylyl-removing enzyme (947 aa).

The adenylyl removase stretch occupies residues 1–440 (MTPLSSPLSQ…VFNELIGDDE (440 aa)). The segment at 450 to 947 (SEPWREVWQD…ASWRKWLVAV (498 aa)) is adenylyl transferase.

This sequence belongs to the GlnE family. Mg(2+) serves as cofactor.

It catalyses the reaction [glutamine synthetase]-O(4)-(5'-adenylyl)-L-tyrosine + phosphate = [glutamine synthetase]-L-tyrosine + ADP. The enzyme catalyses [glutamine synthetase]-L-tyrosine + ATP = [glutamine synthetase]-O(4)-(5'-adenylyl)-L-tyrosine + diphosphate. Involved in the regulation of glutamine synthetase GlnA, a key enzyme in the process to assimilate ammonia. When cellular nitrogen levels are high, the C-terminal adenylyl transferase (AT) inactivates GlnA by covalent transfer of an adenylyl group from ATP to specific tyrosine residue of GlnA, thus reducing its activity. Conversely, when nitrogen levels are low, the N-terminal adenylyl removase (AR) activates GlnA by removing the adenylyl group by phosphorolysis, increasing its activity. The regulatory region of GlnE binds the signal transduction protein PII (GlnB) which indicates the nitrogen status of the cell. In Salmonella gallinarum (strain 287/91 / NCTC 13346), this protein is Bifunctional glutamine synthetase adenylyltransferase/adenylyl-removing enzyme.